We begin with the raw amino-acid sequence, 488 residues long: Inosine-5'-monophosphate dehydrogenase (488 aa).

CBS domains lie at 93-149 (VVTD…NQPV) and 153-214 (MTPK…CKDE). NAD(+)-binding positions include aspartate 248 and 248–250 (DSS). N6-acetyllysine is present on lysine 267. 298–300 (GIG) contributes to the NAD(+) binding site. Residues glycine 300 and glycine 302 each contribute to the K(+) site. Serine 303 contacts IMP. Cysteine 305 is a binding site for K(+). The active-site Thioimidate intermediate is cysteine 305. IMP is bound by residues 338–340 (DGG), 361–362 (GS), and 385–389 (YRGMG). Arginine 401 functions as the Proton acceptor in the catalytic mechanism. Residue glutamate 415 participates in IMP binding. Lysine 428 carries the N6-acetyllysine modification. Residues glutamate 469, serine 470, and histidine 471 each coordinate K(+).

Belongs to the IMPDH/GMPR family. Homotetramer. K(+) serves as cofactor.

It catalyses the reaction IMP + NAD(+) + H2O = XMP + NADH + H(+). It functions in the pathway purine metabolism; XMP biosynthesis via de novo pathway; XMP from IMP: step 1/1. With respect to regulation, mycophenolic acid (MPA) is a non-competitive inhibitor that prevents formation of the closed enzyme conformation by binding to the same site as the amobile flap. In contrast, mizoribine monophosphate (MZP) is a competitive inhibitor that induces the closed conformation. MPA is a potent inhibitor of mammalian IMPDHs but a poor inhibitor of the bacterial enzymes. MZP is a more potent inhibitor of bacterial IMPDH. Functionally, catalyzes the conversion of inosine 5'-phosphate (IMP) to xanthosine 5'-phosphate (XMP), the first committed and rate-limiting step in the de novo synthesis of guanine nucleotides, and therefore plays an important role in the regulation of cell growth. In Escherichia coli O157:H7, this protein is Inosine-5'-monophosphate dehydrogenase.